Reading from the N-terminus, the 216-residue chain is 3-isopropylmalate dehydratase small subunit (216 aa).

The protein belongs to the LeuD family. LeuD type 1 subfamily. As to quaternary structure, heterodimer of LeuC and LeuD.

It carries out the reaction (2R,3S)-3-isopropylmalate = (2S)-2-isopropylmalate. The protein operates within amino-acid biosynthesis; L-leucine biosynthesis; L-leucine from 3-methyl-2-oxobutanoate: step 2/4. In terms of biological role, catalyzes the isomerization between 2-isopropylmalate and 3-isopropylmalate, via the formation of 2-isopropylmaleate. This chain is 3-isopropylmalate dehydratase small subunit, found in Bordetella avium (strain 197N).